The chain runs to 430 residues: Adenylosuccinate synthetase (430 aa).

GTP is bound by residues 12 to 18 (GDEGKGK) and 40 to 42 (GHT). The Proton acceptor role is filled by aspartate 13. Positions 13 and 40 each coordinate Mg(2+). Residues 13–16 (DEGK), 38–41 (NAGH), threonine 129, arginine 143, glutamine 224, threonine 239, and arginine 303 contribute to the IMP site. The active-site Proton donor is the histidine 41. Residue 299 to 305 (TVSNRER) participates in substrate binding. Residues arginine 305, 331–333 (KLD), and 413–415 (STG) each bind GTP.

The protein belongs to the adenylosuccinate synthetase family. Homodimer. Mg(2+) serves as cofactor.

It is found in the cytoplasm. It catalyses the reaction IMP + L-aspartate + GTP = N(6)-(1,2-dicarboxyethyl)-AMP + GDP + phosphate + 2 H(+). It participates in purine metabolism; AMP biosynthesis via de novo pathway; AMP from IMP: step 1/2. In terms of biological role, plays an important role in the de novo pathway of purine nucleotide biosynthesis. Catalyzes the first committed step in the biosynthesis of AMP from IMP. This is Adenylosuccinate synthetase from Ehrlichia ruminantium (strain Welgevonden).